The chain runs to 99 residues: Aspartyl/glutamyl-tRNA(Asn/Gln) amidotransferase subunit C (99 aa).

This sequence belongs to the GatC family. In terms of assembly, heterotrimer of A, B and C subunits.

The enzyme catalyses L-glutamyl-tRNA(Gln) + L-glutamine + ATP + H2O = L-glutaminyl-tRNA(Gln) + L-glutamate + ADP + phosphate + H(+). It carries out the reaction L-aspartyl-tRNA(Asn) + L-glutamine + ATP + H2O = L-asparaginyl-tRNA(Asn) + L-glutamate + ADP + phosphate + 2 H(+). Allows the formation of correctly charged Asn-tRNA(Asn) or Gln-tRNA(Gln) through the transamidation of misacylated Asp-tRNA(Asn) or Glu-tRNA(Gln) in organisms which lack either or both of asparaginyl-tRNA or glutaminyl-tRNA synthetases. The reaction takes place in the presence of glutamine and ATP through an activated phospho-Asp-tRNA(Asn) or phospho-Glu-tRNA(Gln). In Rhodococcus opacus (strain B4), this protein is Aspartyl/glutamyl-tRNA(Asn/Gln) amidotransferase subunit C.